Consider the following 371-residue polypeptide: Ecto-ADP-ribosyltransferase 3 (371 aa).

The signal sequence occupies residues 1–26 (MKMGHFEMVTTLLAAAVLMDIFQVKA). Cysteines 43 and 255 form a disulfide. The region spanning 64-250 (ALLRMVWDNA…LVLQSINSTC (187 aa)) is the TR mART core domain. Tyrosine 101 and asparagine 182 together coordinate NAD(+). A disordered region spans residues 306–346 (VLQTEENPLLPDEKPDRSRGKANNPTPGLVPGPKSHPSASS). Serine 345 carries the GPI-anchor amidated serine lipid modification. A propeptide spans 346–371 (SGNTLLPSVMASTILLVASAVNFIEL) (removed in mature form).

The protein belongs to the Arg-specific ADP-ribosyltransferase family.

It localises to the cell membrane. The catalysed reaction is L-arginyl-[protein] + NAD(+) = N(omega)-(ADP-D-ribosyl)-L-arginyl-[protein] + nicotinamide + H(+). The protein is Ecto-ADP-ribosyltransferase 3 (Art3) of Mus musculus (Mouse).